Consider the following 231-residue polypeptide: Ferritin light chain (231 aa).

A signal peptide spans 1–19; sequence MKMLILAVSCLLAITGSLA. A disulfide bridge connects residues C23 and C43. A Ferritin-like diiron domain is found at 50–208; sequence YGSHGNVATE…GHTSDLKKFI (159 aa). An N-linked (GlcNAc...) asparagine glycan is attached at N134.

The protein belongs to the ferritin family. As to quaternary structure, oligomer of 12 light (L) chains and 12 heavy (H) chains; L and H chains are disulfide-linked. The functional molecule forms a roughly spherical shell with a diameter of 12 nm and contains a central cavity into which the insoluble ferric iron core is deposited.

Its subcellular location is the golgi apparatus. It localises to the secreted. Stores iron in a soluble, non-toxic, readily available form. Important for iron homeostasis. Iron is taken up in the ferrous form and deposited as ferric hydroxides after oxidation. Ferritin is composed of a heavy (H) chain which is responsible for the oxidation and uptake of ferrous iron, and a light (L) chain which facilitates the nucleation of the ferrihydrite iron core. In Trichoplusia ni (Cabbage looper), this protein is Ferritin light chain.